A 218-amino-acid polypeptide reads, in one-letter code: Adenylate kinase (218 aa).

An ATP-binding site is contributed by 10–15 (GAGKGT). Residues 30-59 (STGDMLRAAVKEGSELGLKVKEIMNSGGLV) form an NMP region. AMP is bound by residues Thr31, Arg36, 57-59 (GLV), 85-88 (GFPR), and Gln92. The interval 122–159 (GRRVHPGSGRVYHVDYNPPKEEGKDDVTGEALIQRDDD) is LID. ATP contacts are provided by residues Arg123 and 132–133 (VY). Residues Arg156 and Arg167 each contribute to the AMP site. Gly203 is a binding site for ATP.

This sequence belongs to the adenylate kinase family. In terms of assembly, monomer.

It is found in the cytoplasm. The catalysed reaction is AMP + ATP = 2 ADP. The protein operates within purine metabolism; AMP biosynthesis via salvage pathway; AMP from ADP: step 1/1. In terms of biological role, catalyzes the reversible transfer of the terminal phosphate group between ATP and AMP. Plays an important role in cellular energy homeostasis and in adenine nucleotide metabolism. The polypeptide is Adenylate kinase (Chromohalobacter salexigens (strain ATCC BAA-138 / DSM 3043 / CIP 106854 / NCIMB 13768 / 1H11)).